The primary structure comprises 338 residues: Ketol-acid reductoisomerase (NADP(+)) (338 aa).

Residues M1 to T181 form the KARI N-terminal Rossmann domain. NADP(+)-binding positions include Y24–Q27, R47, and S52. H107 is an active-site residue. G133 contributes to the NADP(+) binding site. Residues N182 to I327 enclose the KARI C-terminal knotted domain. 4 residues coordinate Mg(2+): D190, E194, E226, and E230. Residue S251 participates in substrate binding.

It belongs to the ketol-acid reductoisomerase family. Requires Mg(2+) as cofactor.

The catalysed reaction is (2R)-2,3-dihydroxy-3-methylbutanoate + NADP(+) = (2S)-2-acetolactate + NADPH + H(+). It catalyses the reaction (2R,3R)-2,3-dihydroxy-3-methylpentanoate + NADP(+) = (S)-2-ethyl-2-hydroxy-3-oxobutanoate + NADPH + H(+). Its pathway is amino-acid biosynthesis; L-isoleucine biosynthesis; L-isoleucine from 2-oxobutanoate: step 2/4. It participates in amino-acid biosynthesis; L-valine biosynthesis; L-valine from pyruvate: step 2/4. In terms of biological role, involved in the biosynthesis of branched-chain amino acids (BCAA). Catalyzes an alkyl-migration followed by a ketol-acid reduction of (S)-2-acetolactate (S2AL) to yield (R)-2,3-dihydroxy-isovalerate. In the isomerase reaction, S2AL is rearranged via a Mg-dependent methyl migration to produce 3-hydroxy-3-methyl-2-ketobutyrate (HMKB). In the reductase reaction, this 2-ketoacid undergoes a metal-dependent reduction by NADPH to yield (R)-2,3-dihydroxy-isovalerate. In Aromatoleum aromaticum (strain DSM 19018 / LMG 30748 / EbN1) (Azoarcus sp. (strain EbN1)), this protein is Ketol-acid reductoisomerase (NADP(+)).